The chain runs to 1315 residues: Activating molecule in BECN1-regulated autophagy protein 1A (1315 aa).

WD repeat units lie at residues 50-89 (DSPR…CVHS), 92-132 (GHRR…ESWL), and 134-174 (ESNS…TVVK). 10 disordered regions span residues 294 to 322 (RVPS…ARTE), 342 to 409 (FSSV…QRTG), 426 to 463 (FQSP…SSSI), 502 to 526 (NNNM…NPPH), 545 to 610 (SRRW…DTGQ), 630 to 660 (VYRQ…DNDY), 681 to 736 (RDSV…PRNA), 985 to 1134 (HSDG…STGQ), 1181 to 1208 (GSQT…PESL), and 1286 to 1315 (LLSS…EYGR). Residues 351 to 360 (NMRNHSSSSG) show a composition bias toward polar residues. Residues 378-388 (PGREGGGRHPG) show a composition bias toward basic and acidic residues. Composition is skewed to polar residues over residues 394–409 (SGLN…QRTG) and 426–435 (FQSPVYTSAS). Polar residues-rich tracts occupy residues 552-581 (GQPS…QSNE) and 633-647 (QSAS…QGAL). Over residues 696–715 (RPLSSNPSSLSPSPVPNAES) the composition is skewed to low complexity. The segment covering 716 to 725 (SEVDFEEFEE) has biased composition (acidic residues). Positions 1009-1021 (PSSSRSGDRAGSS) are enriched in low complexity. Basic and acidic residues predominate over residues 1022–1031 (RTDRRSRRDI). Residues 1047–1060 (SVTSQGTQTQNQRL) are compositionally biased toward polar residues. 2 short sequence motifs (TQT motif) span residues 1053–1055 (TQT) and 1065–1067 (TQT). Basic and acidic residues predominate over residues 1061–1072 (QHAETQTDRDLP). The span at 1076–1090 (QQPSTSQGSQVTDAT) shows a compositional bias: polar residues. Residues 1091-1103 (ESLDFETLPEDSG) are compositionally biased toward acidic residues. 2 stretches are compositionally biased toward polar residues: residues 1125-1134 (SEPSTDSTGQ) and 1181-1193 (GSQT…NRTR). A compositionally biased stretch (low complexity) spans 1286–1307 (LLSSSPSLSPVNNSNYSNSDSS).

This sequence belongs to the WD repeat AMBRA1 family. Component of the DCX(AMBRA1) E3 ubiquitin ligase complex.

It is found in the endoplasmic reticulum. Its subcellular location is the cytoplasm. The protein localises to the cytoskeleton. The protein resides in the cytoplasmic vesicle. It localises to the autophagosome. It is found in the mitochondrion. Its subcellular location is the cytosol. The protein localises to the nucleus. The protein resides in the cell junction. It localises to the focal adhesion. Its pathway is protein modification; protein ubiquitination. In terms of biological role, substrate-recognition component of a DCX (DDB1-CUL4-X-box) E3 ubiquitin-protein ligase complex involved in cell cycle control and autophagy. The DCX(AMBRA1) complex specifically mediates the polyubiquitination of target proteins. Acts as an upstream master regulator of the transition from G1 to S cell phase: ambra1a specifically recognizes and binds phosphorylated cyclin-D (ccnd1, ccnd2 and ccnd3), leading to cyclin-D ubiquitination by the DCX(AMBRA1) complex and subsequent degradation. Acts as a regulator of Cul5-RING (CRL5) E3 ubiquitin-protein ligase complexes by mediating ubiquitination and degradation of Elongin-C (eloc) component of CRL5 complexes. Acts as a key regulator of autophagy by modulating the BECN1-PIK3C3 complex: controls protein turnover during neuronal development, and regulates normal cell survival and proliferation. In normal conditions, ambra1a is tethered to the cytoskeleton via interaction with dyneins light chains. Upon autophagy induction, ambra1a is released from the cytoskeletal docking site to induce autophagosome nucleation by mediating ubiquitination of proteins involved in autophagy. Also acts as an activator of mitophagy. Required for skeletal muscle development. The polypeptide is Activating molecule in BECN1-regulated autophagy protein 1A (Danio rerio (Zebrafish)).